Here is a 548-residue protein sequence, read N- to C-terminus: Alpha-1,3-mannosyl-glycoprotein 4-beta-N-acetylglucosaminyltransferase B (548 aa).

At 1 to 7 (MRLRNGT) the chain is on the cytoplasmic side. A helical; Signal-anchor for type II membrane protein membrane pass occupies residues 8 to 28 (FLTLLLFCLCAFLSLSWYAAL). The Lumenal segment spans residues 29–548 (SGQKGDVVDI…LSEIFLKKAD (520 aa)). Residues 36 to 83 (VDIYQREFLALRDRLHAAEQESLKRSKELNLVLEEIKRAVSERQALRD) are a coiled coil. Residues Asn87 and Asn103 are each glycosylated (N-linked (GlcNAc...) asparagine).

It belongs to the glycosyltransferase 54 family. As to quaternary structure, interacts with SLC35A3. The cofactor is a divalent metal cation. Post-translationally, N-glycosylated.

The protein localises to the golgi apparatus membrane. The enzyme catalyses N(4)-{beta-D-GlcNAc-(1-&gt;2)-alpha-D-Man-(1-&gt;3)-[beta-D-GlcNAc-(1-&gt;2)-alpha-D-Man-(1-&gt;6)]-beta-D-Man-(1-&gt;4)-beta-D-GlcNAc-(1-&gt;4)-beta-D-GlcNAc}-L-asparaginyl-[protein] + UDP-N-acetyl-alpha-D-glucosamine = N(4)-{beta-D-GlcNAc-(1-&gt;2)-[beta-D-GlcNAc-(1-&gt;4)]-alpha-D-Man-(1-&gt;3)-[beta-D-GlcNAc-(1-&gt;2)-alpha-D-Man-(1-&gt;6)]-beta-D-Man-(1-&gt;4)-beta-D-GlcNAc-(1-&gt;4)-beta-D-GlcNAc}-L-asparaginyl-[protein] + UDP + H(+). It catalyses the reaction an N(4)-{beta-D-GlcNAc-(1-&gt;2)-alpha-D-Man-(1-&gt;3)-[alpha-D-Man-(1-&gt;6)]-beta-D-Man-(1-&gt;4)-beta-D-GlcNAc-(1-&gt;4)-beta-D-GlcNAc}-L-asparaginyl-[protein] + UDP-N-acetyl-alpha-D-glucosamine = an N(4)-{beta-D-GlcNAc-(1-&gt;2)-[beta-D-GlcNAc-(1-&gt;4)]-alpha-D-Man-(1-&gt;3)-[alpha-D-Man-(1-&gt;6)]-beta-D-Man-(1-&gt;4)-beta-D-GlcNAc-(1-&gt;4)-beta-D-GlcNAc}-L-asparaginyl-[protein] + UDP + H(+). The catalysed reaction is an N(4)-{beta-D-GlcNAc-(1-&gt;2)-alpha-D-Man-(1-&gt;3)-[beta-D-GlcNAc-(1-&gt;2)-[beta-D-GlcNAc-(1-&gt;6)]-alpha-D-Man-(1-&gt;6)]-beta-D-Man-(1-&gt;4)-beta-D-GlcNAc-(1-&gt;4)-beta-D-GlcNAc}-L-asparaginyl-[protein] + UDP-N-acetyl-alpha-D-glucosamine = an N(4)-{beta-D-GlcNAc-(1-&gt;2)-[beta-D-GlcNAc-(1-&gt;4)]-alpha-D-Man-(1-&gt;3)-[beta-D-GlcNAc-(1-&gt;2)-[beta-D-GlcNAc-(1-&gt;6)]-alpha-D-Man-(1-&gt;6)]-beta-D-Man-(1-&gt;4)-beta-D-GlcNAc-(1-&gt;4)-beta-D-GlcNAc}-L-asparaginyl-[protein] + UDP + H(+). It carries out the reaction an N(4)-{beta-D-GlcNAc-(1-&gt;2)-alpha-D-Man-(1-&gt;3)-[beta-D-GlcNAc-(1-&gt;2)-alpha-D-Man-(1-&gt;6)]-beta-D-Man-(1-&gt;4)-beta-D-GlcNAc-(1-&gt;4)-[alpha-L-Fuc-(1-&gt;6)]-beta-D-GlcNAc}-L-asparaginyl-[protein] + UDP-N-acetyl-alpha-D-glucosamine = N(4)-{beta-D-GlcNAc-(1-&gt;2)-[beta-D-GlcNAc-(1-&gt;4)]-alpha-D-Man-(1-&gt;3)-[beta-D-GlcNAc-(1-&gt;2)-alpha-D-Man-(1-&gt;6)]-beta-D-Man-(1-&gt;4)-beta-D-GlcNAc-(1-&gt;4)-[alpha-L-Fuc-(1-&gt;6)]-beta-D-GlcNAc}-asparaginyl-[protein] + UDP + H(+). The enzyme catalyses an N(4)-{beta-D-GlcNAc-(1-&gt;2)-alpha-D-Man-(1-&gt;3)-[beta-D-Gal-(1-&gt;4)-beta-D-GlcNAc-(1-&gt;2)-alpha-D-Man-(1-&gt;6)]-beta-D-Man-(1-&gt;4)-beta-D-GlcNAc-(1-&gt;4)-beta-D-GlcNAc}-L-asparaginyl-[protein] + UDP-N-acetyl-alpha-D-glucosamine = an N(4)-{beta-D-GlcNAc-(1-&gt;2)-[beta-D-GlcNAc-(1-&gt;4)]-alpha-D-Man-(1-&gt;3)-[beta-D-Gal-(1-&gt;4)-beta-D-GlcNAc-(1-&gt;2)-alpha-D-Man-(1-&gt;6)]-beta-D-Man-(1-&gt;4)-beta-D-GlcNAc-(1-&gt;4)-beta-D-GlcNAc}-L-asparaginyl-[protein] + UDP + H(+). It catalyses the reaction N(4)-{beta-D-GlcNAc-(1-&gt;2)-alpha-D-Man-(1-&gt;3)-[alpha-D-Man-(1-&gt;3)-{alpha-D-Man-(1-&gt;6)}-alpha-D-Man-(1-&gt;6)]-beta-D-Man-(1-&gt;4)-beta-D-GlcNAc-(1-&gt;4)-beta-D-GlcNAc}-asparaginyl-[protein] + UDP-N-acetyl-alpha-D-glucosamine = N(4)-{beta-D-GlcNAc-(1-&gt;2)-[beta-D-GlcNAc-(1-&gt;4)]-alpha-D-Man-(1-&gt;3)-[alpha-D-Man-(1-&gt;3)-{alpha-D-Man-(1-&gt;6)}-alpha-D-Man-(1-&gt;6)]-beta-D-Man-(1-&gt;4)-beta-D-GlcNAc-(1-&gt;4)-beta-D-GlcNAc}-asparaginyl-[protein] + UDP + H(+). The catalysed reaction is N(4)-{beta-D-GlcNAc-(1-&gt;2)-alpha-D-Man-(1-&gt;3)-beta-D-Man-(1-&gt;4)-beta-D-GlcNAc-(1-&gt;4)-beta-D-GlcNAc}-asparaginyl-[protein] + UDP-N-acetyl-alpha-D-glucosamine = N(4)-{beta-D-GlcNAc-(1-&gt;2)-[beta-D-GlcNAc-(1-&gt;4)]-alpha-D-Man-(1-&gt;3)-beta-D-Man-(1-&gt;4)-beta-D-GlcNAc-(1-&gt;4)-beta-D-GlcNAc}-asparaginyl-[protein] + UDP + H(+). The protein operates within protein modification; protein glycosylation. Its function is as follows. Glycosyltransferase that catalyzes the transfer of GlcNAc from UDP-GlcNAc to the GlcNAcbeta1-2Manalpha1-3 arm of the core structure of N-linked glycans through a beta1-4 linkage and participates in the production of tri- and tetra-antennary N-linked sugar chains. Prefers complex-type N-glycans over hybrid-types. Has lower affinities for donors or acceptors than MGAT4A, suggesting that, under physiological conditions, it is not the main contributor in N-glycan biosynthesis. The protein is Alpha-1,3-mannosyl-glycoprotein 4-beta-N-acetylglucosaminyltransferase B of Mus musculus (Mouse).